The following is a 354-amino-acid chain: MSKVKSITRESWILSTFPEWGSWLNEEIEQEQVAPGTFAMWWLGCTGIWLKSEGGTNVCVDFWCGTGKQSHGNPLMKQGHQMQRMAGVKKLQPNLRTTPFVLDPFAIRQIDAVLATHDHNDHIDVNVAAAVMQNCADDVPFIGPKTCVDLWIGWGVPKERCIVVKPGDVVKVKDIEIHALDAFDRTALITLPADQKAAGVLPDGMDDRAVNYLFKTPGGSLYHSGDSHYSNYYAKHGNEHQIDVALGSYGENPRGITDKMTSADMLRMGEALNAKVVIPFHHDIWSNFQADPQEIRVLWEMKKDRLKYGFKPFIWQVGGKFTWPLDKDNFEYHYPRGFDDCFTIEPDLPFKSFL.

The protein belongs to the UlaG family. It depends on a divalent metal cation as a cofactor.

It is found in the cytoplasm. The enzyme catalyses L-ascorbate 6-phosphate + H2O = 3-dehydro-L-gulonate 6-phosphate. Its pathway is cofactor degradation; L-ascorbate degradation; D-xylulose 5-phosphate from L-ascorbate: step 1/4. In terms of biological role, probably catalyzes the hydrolysis of L-ascorbate-6-P into 3-keto-L-gulonate-6-P. Is essential for L-ascorbate utilization under anaerobic conditions. The sequence is that of Probable L-ascorbate-6-phosphate lactonase UlaG from Escherichia coli O139:H28 (strain E24377A / ETEC).